The primary structure comprises 388 residues: Zinc finger C2H2 protein ECU10_0150 (388 aa).

The C2H2-type zinc finger occupies 299-322 (YKCGFCGKAFESEKFIFNHFNNKH).

This Encephalitozoon cuniculi (strain GB-M1) (Microsporidian parasite) protein is Zinc finger C2H2 protein ECU10_0150.